A 1087-amino-acid polypeptide reads, in one-letter code: 2'-5'-oligoadenylate synthase 3 (1087 aa).

Methionine 1 carries the post-translational modification N-acetylmethionine. An OAS domain 1 region spans residues 6-343; the sequence is TPAAALDRFV…GDPVQSWKGP (338 aa). Interaction with dsRNA regions lie at residues 12–57 and 186–200; these read DRFV…VLKT and ELRR…AKLK. The linker stretch occupies residues 344–410; that stretch reads GLPRAGCSGL…VPGMALDLSQ (67 aa). Position 365 is a phosphothreonine (threonine 365). OAS domain stretches follow at residues 411 to 742 and 750 to 1084; these read IPTK…PWDV and TPAG…WPVK. Serine 804 is a binding site for ATP. The Mg(2+) site is built by aspartate 816, aspartate 818, and aspartate 888. ATP contacts are provided by arginine 947, lysine 950, and glutamine 969.

This sequence belongs to the 2-5A synthase family. Monomer. It depends on Mg(2+) as a cofactor. Present at high level in placenta trophoblast.

It localises to the cytoplasm. Its subcellular location is the nucleus. It carries out the reaction 3 ATP = 5'-triphosphoadenylyl-(2'-&gt;5')-adenylyl-(2'-&gt;5')-adenosine + 2 diphosphate. Its activity is regulated as follows. Produced as a latent enzyme which is activated by dsRNA generated during the course of viral infection. Strongly activated by long dsRNAs at least 50 nucleotides in length. ssRNA does not activate the enzyme. Its function is as follows. Interferon-induced, dsRNA-activated antiviral enzyme which plays a critical role in cellular innate antiviral response. In addition, it may also play a role in other cellular processes such as apoptosis, cell growth, differentiation and gene regulation. Synthesizes preferentially dimers of 2'-5'-oligoadenylates (2-5A) from ATP which then bind to the inactive monomeric form of ribonuclease L (RNase L) leading to its dimerization and subsequent activation. Activation of RNase L leads to degradation of cellular as well as viral RNA, resulting in the inhibition of protein synthesis, thus terminating viral replication. Can mediate the antiviral effect via the classical RNase L-dependent pathway or an alternative antiviral pathway independent of RNase L. Displays antiviral activity against Chikungunya virus (CHIKV), Dengue virus, Sindbis virus (SINV) and Semliki forest virus (SFV). This is 2'-5'-oligoadenylate synthase 3 (OAS3) from Homo sapiens (Human).